The primary structure comprises 273 residues: NADPH-dependent 7-cyano-7-deazaguanine reductase (273 aa).

81–83 (VES) contacts substrate. 83–84 (SK) serves as a coordination point for NADPH. C179 functions as the Thioimide intermediate in the catalytic mechanism. D186 functions as the Proton donor in the catalytic mechanism. Residue 218–219 (AE) coordinates substrate. NADPH is bound at residue 247-248 (RG).

It belongs to the GTP cyclohydrolase I family. QueF type 2 subfamily. Homodimer.

The protein localises to the cytoplasm. It carries out the reaction 7-aminomethyl-7-carbaguanine + 2 NADP(+) = 7-cyano-7-deazaguanine + 2 NADPH + 3 H(+). It functions in the pathway tRNA modification; tRNA-queuosine biosynthesis. Its function is as follows. Catalyzes the NADPH-dependent reduction of 7-cyano-7-deazaguanine (preQ0) to 7-aminomethyl-7-deazaguanine (preQ1). This chain is NADPH-dependent 7-cyano-7-deazaguanine reductase, found in Rickettsia massiliae (strain Mtu5).